The chain runs to 255 residues: Hydroxyacylglutathione hydrolase (255 aa).

Zn(2+) contacts are provided by His-52, His-54, Asp-56, His-57, His-108, Asp-130, and His-168.

The protein belongs to the metallo-beta-lactamase superfamily. Glyoxalase II family. Monomer. Zn(2+) serves as cofactor.

The catalysed reaction is an S-(2-hydroxyacyl)glutathione + H2O = a 2-hydroxy carboxylate + glutathione + H(+). It functions in the pathway secondary metabolite metabolism; methylglyoxal degradation; (R)-lactate from methylglyoxal: step 2/2. Functionally, thiolesterase that catalyzes the hydrolysis of S-D-lactoyl-glutathione to form glutathione and D-lactic acid. This chain is Hydroxyacylglutathione hydrolase, found in Albidiferax ferrireducens (strain ATCC BAA-621 / DSM 15236 / T118) (Rhodoferax ferrireducens).